The following is a 91-amino-acid chain: DNA-directed RNA polymerase subunit omega (91 aa).

The protein belongs to the RNA polymerase subunit omega family. The RNAP catalytic core consists of 2 alpha, 1 beta, 1 beta' and 1 omega subunit. When a sigma factor is associated with the core the holoenzyme is formed, which can initiate transcription.

It carries out the reaction RNA(n) + a ribonucleoside 5'-triphosphate = RNA(n+1) + diphosphate. Functionally, promotes RNA polymerase assembly. Latches the N- and C-terminal regions of the beta' subunit thereby facilitating its interaction with the beta and alpha subunits. This Serratia proteamaculans (strain 568) protein is DNA-directed RNA polymerase subunit omega.